An 856-amino-acid chain; its full sequence is DNA mismatch repair protein MutS (856 aa).

An ATP-binding site is contributed by Gly-618–Ser-625.

Belongs to the DNA mismatch repair MutS family.

Functionally, this protein is involved in the repair of mismatches in DNA. It is possible that it carries out the mismatch recognition step. This protein has a weak ATPase activity. The polypeptide is DNA mismatch repair protein MutS (Shewanella putrefaciens (strain CN-32 / ATCC BAA-453)).